We begin with the raw amino-acid sequence, 435 residues long: tRNA modification GTPase MnmE (435 aa).

Residues arginine 20, glutamate 77, and lysine 117 each contribute to the (6S)-5-formyl-5,6,7,8-tetrahydrofolate site. In terms of domain architecture, TrmE-type G spans 214–359 (GFKIVIVGAP…FMKELESFCL (146 aa)). Residues 224–229 (NSGKSS), 243–249 (TEEAGTT), and 268–271 (DTAG) each bind GTP. Residues serine 228 and threonine 249 each coordinate Mg(2+). Lysine 435 provides a ligand contact to (6S)-5-formyl-5,6,7,8-tetrahydrofolate.

The protein belongs to the TRAFAC class TrmE-Era-EngA-EngB-Septin-like GTPase superfamily. TrmE GTPase family. As to quaternary structure, homodimer. Heterotetramer of two MnmE and two MnmG subunits. Requires K(+) as cofactor.

Its subcellular location is the cytoplasm. Exhibits a very high intrinsic GTPase hydrolysis rate. Involved in the addition of a carboxymethylaminomethyl (cmnm) group at the wobble position (U34) of certain tRNAs, forming tRNA-cmnm(5)s(2)U34. In Bartonella henselae (strain ATCC 49882 / DSM 28221 / CCUG 30454 / Houston 1) (Rochalimaea henselae), this protein is tRNA modification GTPase MnmE.